Here is a 74-residue protein sequence, read N- to C-terminus: DNA gyrase inhibitor YacG (74 aa).

Zn(2+) is bound by residues C7, C10, C26, and C30.

It belongs to the DNA gyrase inhibitor YacG family. As to quaternary structure, interacts with GyrB. The cofactor is Zn(2+).

Functionally, inhibits all the catalytic activities of DNA gyrase by preventing its interaction with DNA. Acts by binding directly to the C-terminal domain of GyrB, which probably disrupts DNA binding by the gyrase. The protein is DNA gyrase inhibitor YacG of Shewanella denitrificans (strain OS217 / ATCC BAA-1090 / DSM 15013).